The sequence spans 61 residues: MYYTGAEGSVFPGCYWGSYGYPLGYSVGCGYGSTYSPVGYGLGYGYNGCGAYRRYWPFALY.

The interval 13–49 (GCYWGSYGYPLGYSVGCGYGSTYSPVGYGLGYGYNGC) is 11 X 2 AA repeats of G-[YCGS].

Belongs to the KRTAP type 8 family. Interacts with hair keratins. In terms of tissue distribution, expression restricted exclusively to the cortical cells of hair follicles.

Its function is as follows. In the hair cortex, hair keratin intermediate filaments are embedded in an interfilamentous matrix, consisting of hair keratin-associated proteins (KRTAP), which are essential for the formation of a rigid and resistant hair shaft through their extensive disulfide bond cross-linking with abundant cysteine residues of hair keratins. The matrix proteins include the high-sulfur and high-glycine-tyrosine keratins. This is Keratin-associated protein 8-1 (Krtap8-1) from Mus musculus (Mouse).